The sequence spans 447 residues: Citrate synthase-like protein oryE (447 aa).

Residues His331 and Asp387 contribute to the active site.

It belongs to the citrate synthase family.

Its pathway is secondary metabolite biosynthesis. In terms of biological role, citrate synthase-like protein; part of the gene cluster that mediates the biosynthesis of oryzines, natural products with an unusual maleidride backbone. The two subunits of the fungal fatty acid synthase oryfasA and oryfasB probably form octenoic acid. This fatty acid is most likely activated by the acyl-CoA ligase oryP to give octenyl-CoA before the citrate synthase-like protein oryE catalyzes condensation with oxaloacetate to form tricarboxylic acid. The next steps of the pathways are conjectural, but a favorite possible route has been proposed, beginning with decarboxylation and concomitant dehydration by the decarboxylase oryM, followed by tautomerization, which may lead to the production of a diene intermediate. Reduction of this diene intermediate could give the known metabolite piliformic acid. On the pathway to oryzine B and oryzine A, however, hydroxylation of the diene by the alpha-ketoglutarate-dependent dioxygenase oryG and lactonisation by the lactonohydrolases oryH or oryL could give oryzine B directly. Finally, enoyl reduction by the dehydrogenase oryD would then convert oryzine B into oryzine A. The protein is Citrate synthase-like protein oryE of Aspergillus oryzae (strain ATCC 42149 / RIB 40) (Yellow koji mold).